The sequence spans 90 residues: MTRMVQCAKLGKEAEGLDFPPLPGELGKRIYESISKEAWQAWLKQQTMLINENRLNMADPRARQYLMKQTEKFFFGEGADTAQGYVPPSA.

The protein belongs to the Fe(2+)-trafficking protein family.

Functionally, could be a mediator in iron transactions between iron acquisition and iron-requiring processes, such as synthesis and/or repair of Fe-S clusters in biosynthetic enzymes. The sequence is that of Probable Fe(2+)-trafficking protein from Paraburkholderia xenovorans (strain LB400).